The chain runs to 134 residues: Nif-regulating protein A (134 aa).

Residues 3–36 form a C4-type; atypical zinc finger; it reads CLECGLVYIVSGLKVPEKISVRVFVNRIEHPFTH.

In terms of assembly, interacts with the general archaeal transcription factors TBPs.

In terms of biological role, involved in nitrogen regulation. Enhances the transcription of the nitrogen fixation (nif) operon under nitrogen-limited conditions. Acts by binding to the nifH promoter region. The polypeptide is Nif-regulating protein A (Methanosarcina mazei (strain ATCC BAA-159 / DSM 3647 / Goe1 / Go1 / JCM 11833 / OCM 88) (Methanosarcina frisia)).